The primary structure comprises 296 residues: Coiled-coil domain-containing protein 69 (296 aa).

The span at 1 to 18 shows a compositional bias: basic residues; that stretch reads MGCRHSRLSSCKPPKKKR. The disordered stretch occupies residues 1–41; the sequence is MGCRHSRLSSCKPPKKKRQEPEPEQPPRPEPHELGPLNGDT. Glycine 2 carries the N-myristoyl glycine lipid modification. Over residues 19–33 the composition is skewed to basic and acidic residues; that stretch reads QEPEPEQPPRPEPHE. The stretch at 48 to 272 forms a coiled coil; sequence CASEEAERHQ…QEKEELLYRV (225 aa). A phosphoserine mark is found at serine 154 and serine 241.

This sequence belongs to the CCDC69 family. Highly expressed in duodenum, esophagus, pancreas, prostate, salivary gland, thymus and urinary bladder.

The protein localises to the cytoplasm. It localises to the cytoskeleton. Its subcellular location is the spindle. The protein resides in the midbody. Functionally, may act as a scaffold to regulate the recruitment and assembly of spindle midzone components. Required for the localization of AURKB and PLK1 to the spindle midzone. The polypeptide is Coiled-coil domain-containing protein 69 (Homo sapiens (Human)).